We begin with the raw amino-acid sequence, 923 residues long: Probable dipeptidyl-aminopeptidase B (923 aa).

Residues Met1–Pro16 are compositionally biased toward basic and acidic residues. The interval Met1–Ser21 is disordered. The Cytoplasmic portion of the chain corresponds to Met1–Ala99. Residues Leu100 to Phe120 traverse the membrane as a helical; Signal-anchor for type II membrane protein segment. The Vacuolar segment spans residues Arg121 to His923. Asn135, Asn351, and Asn574 each carry an N-linked (GlcNAc...) asparagine glycan. Ser756 (charge relay system) is an active-site residue. Asn815 carries N-linked (GlcNAc...) asparagine glycosylation. Residues Asp833 and His866 each act as charge relay system in the active site. Asn902 carries an N-linked (GlcNAc...) asparagine glycan.

The protein belongs to the peptidase S9B family.

It is found in the vacuole membrane. It carries out the reaction Release of an N-terminal dipeptide, Xaa-Yaa-|-Zaa-, from a polypeptide, preferentially when Yaa is Pro, provided Zaa is neither Pro nor hydroxyproline.. In terms of biological role, type IV dipeptidyl-peptidase which removes N-terminal dipeptides sequentially from polypeptides having unsubstituted N-termini provided that the penultimate residue is proline. This Ajellomyces capsulatus (strain G186AR / H82 / ATCC MYA-2454 / RMSCC 2432) (Darling's disease fungus) protein is Probable dipeptidyl-aminopeptidase B (DAPB).